Reading from the N-terminus, the 592-residue chain is Guanylate-binding protein 1 (592 aa).

The GTPase domain (Globular) stretch occupies residues Met-1–Cys-311. Residues Thr-35–Lys-278 form the GB1/RHD3-type G domain. GTP-binding positions include Gly-45–Ser-52, Leu-67–Ser-69, and Asp-97–Leu-101. Ser-156 bears the Phosphoserine; by PIM1 mark. Residues Lys-207, Lys-209, Lys-210, Lys-382, Lys-562, Lys-567, Lys-573, and Lys-587 each participate in a (Microbial infection) Glycyl lysine isopeptide (Lys-Gly) (interchain with G-Cter in ubiquitin) cross-link. Residue Cys-589 is modified to Cysteine methyl ester. Cys-589 carries the S-farnesyl cysteine lipid modification. A Phosphothreonine; by PIM1 modification is found at Thr-590. Residues Thr-590–Ser-592 constitute a propeptide, removed in mature form.

This sequence belongs to the TRAFAC class dynamin-like GTPase superfamily. GB1/RHD3 GTPase family. GB1 subfamily. In terms of assembly, homodimer; homodimerization occurs upon GTP-binding and is required for the second hydrolysis step from GDP to GMP. Undergoes conformational changes and oligomerization upon GTP-binding and hydrolysis. Heterodimer with other family members, including GBP2, GBP3, GBP4 and GBP5. Dimerization regulates subcellular location to membranous structures. Interacts with SQSTM1. Interacts (when phosphorylated) with 14-3-3 protein sigma (SFN); leading to GBP1 retention in the cytosol and inactivation. Post-translationally, isoprenylation is required for proper subcellular location. In terms of processing, phosphorylated at Ser-156 by PIM1 in absence of infection, inhibits GBP1: phosphorylation promotes interaction with 14-3-3 protein sigma (SFN), leading to GBP1 retention in the cytosol. Dephosphorylated in response to infection, liberating GBP1. (Microbial infection) Ubiquitinated by S.flexneri IpaH9.8, leading to its degradation by the proteasome, thereby preventing its ability to promote host defense against bacterial infection.

The protein localises to the cytoplasmic vesicle membrane. It localises to the golgi apparatus membrane. The protein resides in the cell membrane. It is found in the cytoplasm. Its subcellular location is the cytosol. The protein localises to the secreted. The enzyme catalyses GTP + H2O = GDP + phosphate + H(+). It carries out the reaction GDP + H2O = GMP + phosphate + H(+). Interferon (IFN)-inducible GTPase that plays important roles in innate immunity against a diverse range of bacterial, viral and protozoan pathogens. Hydrolyzes GTP to GMP in two consecutive cleavage reactions: GTP is first hydrolyzed to GDP and then to GMP in a processive manner. Following infection, recruited to the pathogen-containing vacuoles or vacuole-escaped bacteria and promotes both inflammasome assembly and autophagy. Acts as a positive regulator of inflammasome assembly by facilitating the detection of inflammasome ligands from pathogens. Involved in the lysis of pathogen-containing vacuoles, releasing pathogens into the cytosol. Following pathogen release in the cytosol, forms a protein coat in a GTPase-dependent manner that encapsulates pathogens and promotes the detection of ligands by pattern recognition receptors. Plays a key role in inflammasome assembly in response to infection by Gram-negative bacteria: following pathogen release in the cytosol, forms a protein coat that encapsulates Gram-negative bacteria and directly binds to lipopolysaccharide (LPS), disrupting the O-antigen barrier and unmasking lipid A that is that detected by the non-canonical inflammasome effector CASP4/CASP11. Also promotes recruitment of proteins that mediate bacterial cytolysis, leading to release double-stranded DNA (dsDNA) that activates the AIM2 inflammasome. Involved in autophagy by regulating bacteriolytic peptide generation via its interaction with ubiquitin-binding protein SQSTM1, which delivers monoubiquitinated proteins to autolysosomes for the generation of bacteriolytic peptides. Confers protection to several pathogens, including the bacterial pathogens L.monocytogenes and M.bovis BCG as well as the protozoan pathogen T.gondii. Exhibits antiviral activity against influenza virus. The sequence is that of Guanylate-binding protein 1 from Homo sapiens (Human).